A 315-amino-acid polypeptide reads, in one-letter code: Methionyl-tRNA formyltransferase (315 aa).

Residue 111–114 coordinates (6S)-5,6,7,8-tetrahydrofolate; sequence SLLP.

It belongs to the Fmt family.

It catalyses the reaction L-methionyl-tRNA(fMet) + (6R)-10-formyltetrahydrofolate = N-formyl-L-methionyl-tRNA(fMet) + (6S)-5,6,7,8-tetrahydrofolate + H(+). In terms of biological role, attaches a formyl group to the free amino group of methionyl-tRNA(fMet). The formyl group appears to play a dual role in the initiator identity of N-formylmethionyl-tRNA by promoting its recognition by IF2 and preventing the misappropriation of this tRNA by the elongation apparatus. The protein is Methionyl-tRNA formyltransferase of Chlorobium phaeobacteroides (strain DSM 266 / SMG 266 / 2430).